Here is a 287-residue protein sequence, read N- to C-terminus: Inorganic pyrophosphatase (287 aa).

Thr-65 bears the Phosphothreonine mark. Arg-79 lines the diphosphate pocket. The active-site Proton donor is the Tyr-90. Residues Asp-116, Asp-121, and Asp-153 each coordinate Mg(2+). Lys-239 participates in a covalent cross-link: Glycyl lysine isopeptide (Lys-Gly) (interchain with G-Cter in ubiquitin). Thr-251 is modified (phosphothreonine). The residue at position 266 (Ser-266) is a Phosphoserine. Lys-279 is covalently cross-linked (Glycyl lysine isopeptide (Lys-Gly) (interchain with G-Cter in ubiquitin)). Ser-286 bears the Phosphoserine mark.

This sequence belongs to the PPase family. As to quaternary structure, homodimer. Requires Mg(2+) as cofactor.

The protein resides in the cytoplasm. The enzyme catalyses diphosphate + H2O = 2 phosphate + H(+). This chain is Inorganic pyrophosphatase (IPP1), found in Saccharomyces cerevisiae (strain ATCC 204508 / S288c) (Baker's yeast).